We begin with the raw amino-acid sequence, 488 residues long: Probable 26S proteasome non-ATPase regulatory subunit 3 (488 aa).

Residues 1 to 20 (MTQDVEMKEQAAPPSNSLSS) are disordered. Residues 240-421 (SRYLFYLGKI…GWMVSKETGD (182 aa)) enclose the PCI domain. The interval 452–488 (FPPNSHKEKESAEKRRERQQQEQELAKHIAEEDDDDF) is disordered. The span at 456–481 (SHKEKESAEKRRERQQQEQELAKHIA) shows a compositional bias: basic and acidic residues.

This sequence belongs to the proteasome subunit S3 family. As to quaternary structure, the 26S proteasome is composed of a core protease, known as the 20S proteasome, capped at one or both ends by the 19S regulatory complex (RC). The RC is composed of at least 18 different subunits in two subcomplexes, the base and the lid, which form the portions proximal and distal to the 20S proteolytic core, respectively.

The protein localises to the nucleus. In terms of biological role, acts as a regulatory subunit of the 26 proteasome which is involved in the ATP-dependent degradation of ubiquitinated proteins. This is Probable 26S proteasome non-ATPase regulatory subunit 3 (21D7) from Nicotiana tabacum (Common tobacco).